Here is a 3184-residue protein sequence, read N- to C-terminus: Probable serine/threonine-protein kinase pats1 (3184 aa).

Positions 369–378 (DPPPPPPSNS) are enriched in pro residues. Disordered regions lie at residues 369 to 516 (DPPP…QIPP) and 913 to 1013 (SITR…TSIL). The span at 379–415 (SPPISKSTSNNNLNVSNYHNNNNNNNNSNSNLSNSGN) shows a compositional bias: low complexity. The span at 421–450 (DFQSQNLVKSYNRENSGNSLNSMLHQTSLP) shows a compositional bias: polar residues. Low complexity predominate over residues 451-512 (NNNNSNVVNN…NNNNSNNNNS (62 aa)). Positions 842-1348 (CFPDHSLLQE…FQDTMWNEYF (507 aa)) constitute a Myotubularin phosphatase domain. Residues 913-934 (SITRATSPEDQNNGSSNYLLTP) show a composition bias toward polar residues. The span at 935-993 (NSPNSSSSNLANNNNSNNNNINNNNNNNNNNNNNNNNNSNNNNNNNNNNNNNNNNNNNN) shows a compositional bias: low complexity. The segment covering 1000-1013 (SRSTTIDNGQTSIL) has biased composition (polar residues). 13 LRR repeats span residues 1391–1412 (FLET…STLY), 1416–1438 (GLRE…SSLV), 1439–1460 (KLEK…TVVL), 1467–1488 (SLTE…FSMF), 1491–1512 (SLKK…LGML), 1514–1535 (NLIE…GVGI), 1541–1563 (KLCI…GDLK), 1564–1585 (SLEK…FRQL), 1587–1608 (NLEE…VCFL), 1610–1631 (NLKK…ISQL), 1633–1654 (KLMI…IGQL), 1656–1678 (QLVS…MGLL), and 1680–1701 (NLVE…IVSL). Positions 1716–1910 (GQEQCYKMKL…EKLEALVQSQ (195 aa)) constitute a Roc domain. Residues 1716–1910 (GQEQCYKMKL…EKLEALVQSQ (195 aa)) are small GTPase-like. GTP is bound by residues 1729–1736 (GQENVGKT), 1797–1801 (DFAGQ), and 1854–1857 (THLD). One can recognise a COR domain in the interval 1918-2127 (PRSYMLLENL…KCYWKNGMIL (210 aa)). In terms of domain architecture, Protein kinase spans 2247 to 2519 (LMIEELIGEG…RLIKIAEAMF (273 aa)). ATP contacts are provided by residues 2253-2261 (IGEGGAALV) and Lys2274. The Proton acceptor role is filled by Asp2379. 2 disordered regions span residues 2528–2609 (YQQQ…TISH) and 2652–2671 (NSIN…NSLL). The segment covering 2529-2555 (QQQQQQQQQQQQSSPSKSSSTSPIIKS) has biased composition (low complexity). The segment covering 2556-2576 (LNLSTVSELGESSNQTPKQNI) has biased composition (polar residues). WD repeat units lie at residues 2745 to 2785 (PNQG…KYIQ), 2790 to 2829 (ANKD…KIKS), 2909 to 2947 (AHER…HTIE), 2949 to 2986 (AHSS…LVSE), and 2990 to 3040 (KHKD…NSRS). Over residues 3055 to 3126 (GSSNSITNSN…NYYYSNNVNS (72 aa)) the composition is skewed to low complexity. A disordered region spans residues 3055–3164 (GSSNSITNSN…TPPGSKGLMQ (110 aa)). The span at 3141-3157 (HEQTSPNSATPLSSTPP) shows a compositional bias: polar residues.

This sequence belongs to the protein kinase superfamily. TKL Ser/Thr protein kinase family. ROCO subfamily.

It carries out the reaction L-seryl-[protein] + ATP = O-phospho-L-seryl-[protein] + ADP + H(+). It catalyses the reaction L-threonyl-[protein] + ATP = O-phospho-L-threonyl-[protein] + ADP + H(+). In terms of biological role, may act as a serine/threonine-protein kinase and guanine-nucleotide releasing factor. Essential regulator of cytokinesis involved in the binding to actomyosin cytoskeleton. The sequence is that of Probable serine/threonine-protein kinase pats1 (pats1) from Dictyostelium discoideum (Social amoeba).